Reading from the N-terminus, the 190-residue chain is Segregation and condensation protein B (190 aa).

It belongs to the ScpB family. Homodimer. Homodimerization may be required to stabilize the binding of ScpA to the Smc head domains. Component of a cohesin-like complex composed of ScpA, ScpB and the Smc homodimer, in which ScpA and ScpB bind to the head domain of Smc. The presence of the three proteins is required for the association of the complex with DNA.

The protein localises to the cytoplasm. Participates in chromosomal partition during cell division. May act via the formation of a condensin-like complex containing Smc and ScpA that pull DNA away from mid-cell into both cell halves. The chain is Segregation and condensation protein B from Bacillus cereus (strain G9842).